The primary structure comprises 241 residues: Orotidine 5'-phosphate decarboxylase (241 aa).

Substrate contacts are provided by residues aspartate 19, lysine 41, 69-78 (DLKFFDIPAT), threonine 124, arginine 185, glutamine 194, glycine 214, and arginine 215. The active-site Proton donor is lysine 71.

The protein belongs to the OMP decarboxylase family. Type 1 subfamily. In terms of assembly, homodimer.

The catalysed reaction is orotidine 5'-phosphate + H(+) = UMP + CO2. It participates in pyrimidine metabolism; UMP biosynthesis via de novo pathway; UMP from orotate: step 2/2. Functionally, catalyzes the decarboxylation of orotidine 5'-monophosphate (OMP) to uridine 5'-monophosphate (UMP). In Stenotrophomonas maltophilia (strain K279a), this protein is Orotidine 5'-phosphate decarboxylase.